We begin with the raw amino-acid sequence, 217 residues long: 3-isopropylmalate dehydratase small subunit (217 aa).

Belongs to the LeuD family. LeuD type 1 subfamily. In terms of assembly, heterodimer of LeuC and LeuD.

The catalysed reaction is (2R,3S)-3-isopropylmalate = (2S)-2-isopropylmalate. The protein operates within amino-acid biosynthesis; L-leucine biosynthesis; L-leucine from 3-methyl-2-oxobutanoate: step 2/4. Functionally, catalyzes the isomerization between 2-isopropylmalate and 3-isopropylmalate, via the formation of 2-isopropylmaleate. The protein is 3-isopropylmalate dehydratase small subunit of Paraburkholderia phymatum (strain DSM 17167 / CIP 108236 / LMG 21445 / STM815) (Burkholderia phymatum).